A 320-amino-acid polypeptide reads, in one-letter code: Olfactory receptor 52N1 (320 aa).

Over 1 to 27 (MSFLNGTSLTPASFILNGIPGLEDVHL) the chain is Extracellular. A glycan (N-linked (GlcNAc...) asparagine) is linked at Asn5. The chain crosses the membrane as a helical span at residues 28 to 48 (WISFPLCTMYSIAITGNFGLM). Topologically, residues 49-56 (YLIYCDEA) are cytoplasmic. Residues 57–77 (LHRPMYVFLALLSFTDVLMCT) form a helical membrane-spanning segment. At 78 to 101 (STLPNTLFILWFNLKEIDFKACLA) the chain is on the extracellular side. The cysteines at positions 99 and 191 are disulfide-linked. A helical membrane pass occupies residues 102–122 (QMFFVHTFTGMESGVLMLMAL). At 123 to 141 (DHCVAICFPLRYATILTNS) the chain is on the cytoplasmic side. A helical membrane pass occupies residues 142–162 (VIAKAGFLTFLRGVMLVIPST). Residues 163–198 (FLTKRLPYCKGNVIPHTYCDHMSVAKISCGNVRVNA) are Extracellular-facing. Residues 199–219 (IYGLIVALLIGGFDILCITIS) traverse the membrane as a helical segment. Residues 220-239 (YTMILQAVVSLSSADARQKA) are Cytoplasmic-facing. A helical transmembrane segment spans residues 240-260 (FSTCTAHFCAIVLTYVPAFFT). Residues 261-276 (FFTHHFGGHTIPLHIH) lie on the Extracellular side of the membrane. A helical transmembrane segment spans residues 277-297 (IIMANLYLLMPPTMNPIVYGV). Topologically, residues 298–320 (KTRQVRESVIRFFLKGKDNSHNF) are cytoplasmic.

Belongs to the G-protein coupled receptor 1 family.

It is found in the cell membrane. In terms of biological role, odorant receptor. The protein is Olfactory receptor 52N1 (OR52N1) of Homo sapiens (Human).